Reading from the N-terminus, the 631-residue chain is MPTTFQEIPRERPVTPLLDRADTPAGLRRLAEADLETLADELRQELLYTVGQTGGHFGAGLGVIELTIALHYVFDTPDDRLVWDVGHQAYPHKILTGRRNRMLSLRQKDGIAAFPRRSESEYDTFGVGHSSTSISAALGMAIAARLQNSARKSIAVIGDGALTAGMAFEALNHAQEVNADMLVILNDNDMSISRNVGGLSNYLAKILSSRTYASMREGSKKVLSRLPGAWEIARRTEEYAKGMLVPGTLFEELGWNYIGPIDGHDLPTMIATLRNMRDLKGPQFLHVVTKKGKGFAPAEIDPIGYHAITKLEPADKPAAPKKASGPKYSAVFGQWLCDMAAADNRLVGITPAMKEGSDLVDFSERYPERYFDVAIAEQHAVTLAAGMACEGSKPVVAIYSTFLQRAYDQLIHDVAVQNLDVLFAIDRAGLVGEDGPTHAGSYDLSYLRCIPGMLVMTPSDENELRKMLSTGHLYNGPAAVRYPRGTGPNAPISGDLQPLEIGKGVVRRQGEKVALLVFGVQLAEAMQVAEQINATVVDMRFVKPLDEALVLELAGSHELLVTIEENAIMGGAGAAVGEFLASQAVLKPLLHLGLPDIYVEHAKPAQMLAECGLDAAGIEASVKARMARLGL.

Thiamine diphosphate is bound by residues H87 and 128 to 130 (GHS). D159 is a binding site for Mg(2+). Thiamine diphosphate-binding positions include 160-161 (GA), N188, F295, and E377. N188 lines the Mg(2+) pocket.

The protein belongs to the transketolase family. DXPS subfamily. In terms of assembly, homodimer. Requires Mg(2+) as cofactor. It depends on thiamine diphosphate as a cofactor.

The enzyme catalyses D-glyceraldehyde 3-phosphate + pyruvate + H(+) = 1-deoxy-D-xylulose 5-phosphate + CO2. It participates in metabolic intermediate biosynthesis; 1-deoxy-D-xylulose 5-phosphate biosynthesis; 1-deoxy-D-xylulose 5-phosphate from D-glyceraldehyde 3-phosphate and pyruvate: step 1/1. Its function is as follows. Catalyzes the acyloin condensation reaction between C atoms 2 and 3 of pyruvate and glyceraldehyde 3-phosphate to yield 1-deoxy-D-xylulose-5-phosphate (DXP). The polypeptide is 1-deoxy-D-xylulose-5-phosphate synthase (Pseudomonas putida (strain ATCC 47054 / DSM 6125 / CFBP 8728 / NCIMB 11950 / KT2440)).